Reading from the N-terminus, the 277-residue chain is MSLAEQIEQQQGDAGWSAHLQLRFVQRGDVTRLGAWKHFGPLLVQRPFYPEGSPCHVYVLHPPGGIVAGDRLELNIHLEPGSHALLTMPGASKFYRSIGPTARLTQRFHLAAGSTLEWLPQDSIFFSGARASLASRFSLEPGARLLAWETLCLGRPVMHERFDHGTLDSLLHIELPDEVGLHERLRIAGGHLDKLGGHPLLATFCAAPADQAVLEQVRSLLDELGNPAGATLLGSLLVIRLLDHDNQHLQRTLQRLWHVLRPAILGLPACPPRIWAT.

This sequence belongs to the UreD family. As to quaternary structure, ureD, UreF and UreG form a complex that acts as a GTP-hydrolysis-dependent molecular chaperone, activating the urease apoprotein by helping to assemble the nickel containing metallocenter of UreC. The UreE protein probably delivers the nickel.

It localises to the cytoplasm. Functionally, required for maturation of urease via the functional incorporation of the urease nickel metallocenter. The polypeptide is Urease accessory protein UreD (Pseudomonas putida (strain GB-1)).